A 119-amino-acid polypeptide reads, in one-letter code: Protein TusC (119 aa).

The protein belongs to the DsrF/TusC family. Heterohexamer, formed by a dimer of trimers. The hexameric TusBCD complex contains 2 copies each of TusB, TusC and TusD. The TusBCD complex interacts with TusE.

It localises to the cytoplasm. In terms of biological role, part of a sulfur-relay system required for 2-thiolation of 5-methylaminomethyl-2-thiouridine (mnm(5)s(2)U) at tRNA wobble positions. The sequence is that of Protein TusC from Pectobacterium carotovorum subsp. carotovorum (strain PC1).